The following is a 276-amino-acid chain: Elongation factor Ts, mitochondrial (276 aa).

It belongs to the EF-Ts family.

It is found in the mitochondrion. Its function is as follows. Associates with the EF-Tu.GDP complex and induces the exchange of GDP to GTP. It remains bound to the aminoacyl-tRNA.EF-Tu.GTP complex up to the GTP hydrolysis stage on the ribosome. The protein is Elongation factor Ts, mitochondrial of Leishmania infantum.